The primary structure comprises 211 residues: Bcl-2-related ovarian killer protein homolog B (211 aa).

Positions 32–44 (KELCRDFIHSRIT) match the BH4 motif. The BH3 signature appears at 67–83 (VSVVLLKLGDELECMRP). Residues 113–132 (EVIAMGITWGKVVAIYAVAA) carry the BH1 motif. The BH2 motif lies at 165–179 (WLKKRGGWVDILKCV). Residues 190–210 (WLSTAVLTWREFIKTMYVYLT) traverse the membrane as a helical segment.

It belongs to the Bcl-2 family. In terms of tissue distribution, expressed strongly in ovary and more weakly in eye. Little expression in other tissues examined.

The protein resides in the membrane. Functionally, may play a role in apoptosis. Does not appear to show pro-apoptotic activity when expressed ectopically in early embryos. This chain is Bcl-2-related ovarian killer protein homolog B (bokb), found in Danio rerio (Zebrafish).